Here is a 475-residue protein sequence, read N- to C-terminus: Aspartic proteinase 39 (475 aa).

A signal peptide spans 1–23 (MELRRKLCIVVAVFVIVIEFASA). Residues 74–422 (YFTKIKLGSP…DLDNEVIGWA (349 aa)) form the Peptidase A1 domain. Asp92 is a catalytic residue. Residues Asn124 and Asn222 are each glycosylated (N-linked (GlcNAc...) asparagine). Asp303 is an active-site residue. Residues Asn425 and Asn446 are each glycosylated (N-linked (GlcNAc...) asparagine). Ser449 carries GPI-anchor amidated serine lipidation. Residues 450–475 (APRLLMITKLLTILSPLIVMAFTSLA) constitute a propeptide, removed in mature form.

The protein belongs to the peptidase A1 family. Highly expressed in pollen and pollen tubes. Mostly expressed in inflorescence, flowers and siliques, and barely in leaves and seedlings.

The protein resides in the cell membrane. The protein localises to the cytoplasm. It localises to the cytosol. Its function is as follows. Displays aspartic proteolytic activity. Together with A36, contributes to pollen and ovule development, including the apical cell wall constitution of the growing pollen tubes. This Arabidopsis thaliana (Mouse-ear cress) protein is Aspartic proteinase 39.